The chain runs to 173 residues: ATP synthase subunit b (173 aa).

Residues 25–45 (LINLVIVIGVLYWFLKGFLGG) traverse the membrane as a helical segment.

This sequence belongs to the ATPase B chain family. F-type ATPases have 2 components, F(1) - the catalytic core - and F(0) - the membrane proton channel. F(1) has five subunits: alpha(3), beta(3), gamma(1), delta(1), epsilon(1). F(0) has four main subunits: a(1), b(1), b'(1) and c(10-14). The alpha and beta chains form an alternating ring which encloses part of the gamma chain. F(1) is attached to F(0) by a central stalk formed by the gamma and epsilon chains, while a peripheral stalk is formed by the delta, b and b' chains.

The protein resides in the cellular thylakoid membrane. In terms of biological role, f(1)F(0) ATP synthase produces ATP from ADP in the presence of a proton or sodium gradient. F-type ATPases consist of two structural domains, F(1) containing the extramembraneous catalytic core and F(0) containing the membrane proton channel, linked together by a central stalk and a peripheral stalk. During catalysis, ATP synthesis in the catalytic domain of F(1) is coupled via a rotary mechanism of the central stalk subunits to proton translocation. Its function is as follows. Component of the F(0) channel, it forms part of the peripheral stalk, linking F(1) to F(0). The sequence is that of ATP synthase subunit b from Synechococcus sp. (strain CC9311).